The following is a 424-amino-acid chain: MYPYSDADAFRRQPERAKSSQLRTSAVDTRSAFARDRARVLHSAALRRLADKTQVVGPNDGDTPRTRLTHSLEVAQIARGIGAGLDLDPDLCDLAGLCHDIGHPPYGHNGENALNEVAAACGGFEGNAQTLRILTRLEPKIVSDEGESFGLNLSRAALDAACKYPWAKTNADGSVNKKYSAYDEDAEILAWIRQGHEDLRPPIEAQVMDFSDDIAYSVHDVEDGIVSGRIDLKVLWDLVELAALADKGAAAFGGSPAELIEGAASLRELPVVAAAADFDFSLRSYAALKAMTSELVGRYVGSTIESTKKTHAGIDVGRMHGDLIIPETAASEVKLLKTLAVLYVMDDPGHLARQNRQRDRIFRVFDYLVLGAPGSLDPMYRQWFIEADSESEQIRVIVDQIASMTESRLERLARNAADISGFLG.

Residues 1-27 form a disordered region; sequence MYPYSDADAFRRQPERAKSSQLRTSAV. The span at 8 to 18 shows a compositional bias: basic and acidic residues; the sequence is DAFRRQPERAK. The 151-residue stretch at 67–217 folds into the HD domain; it reads RLTHSLEVAQ…MDFSDDIAYS (151 aa).

Belongs to the dGTPase family. Type 2 subfamily.

This chain is Deoxyguanosinetriphosphate triphosphohydrolase-like protein (dgt), found in Corynebacterium glutamicum (strain ATCC 13032 / DSM 20300 / JCM 1318 / BCRC 11384 / CCUG 27702 / LMG 3730 / NBRC 12168 / NCIMB 10025 / NRRL B-2784 / 534).